The sequence spans 105 residues: DNA-directed RNA polymerase subunit omega (105 aa).

Belongs to the RNA polymerase subunit omega family. The RNAP catalytic core consists of 2 alpha, 1 beta, 1 beta' and 1 omega subunit. When a sigma factor is associated with the core the holoenzyme is formed, which can initiate transcription.

The enzyme catalyses RNA(n) + a ribonucleoside 5'-triphosphate = RNA(n+1) + diphosphate. In terms of biological role, promotes RNA polymerase assembly. Latches the N- and C-terminal regions of the beta' subunit thereby facilitating its interaction with the beta and alpha subunits. This Streptococcus equi subsp. zooepidemicus (strain MGCS10565) protein is DNA-directed RNA polymerase subunit omega.